An 860-amino-acid chain; its full sequence is Leucine--tRNA ligase (860 aa).

The 'HIGH' region signature appears at 42–52 (PYPSGRLHMGH). The 'KMSKS' region motif lies at 619–623 (KMSKS). Lysine 622 serves as a coordination point for ATP.

This sequence belongs to the class-I aminoacyl-tRNA synthetase family.

It is found in the cytoplasm. It catalyses the reaction tRNA(Leu) + L-leucine + ATP = L-leucyl-tRNA(Leu) + AMP + diphosphate. The chain is Leucine--tRNA ligase from Sodalis glossinidius (strain morsitans).